The chain runs to 882 residues: Alanine--tRNA ligase (882 aa).

Residues His-563, His-567, Cys-665, and His-669 each contribute to the Zn(2+) site.

The protein belongs to the class-II aminoacyl-tRNA synthetase family. Zn(2+) is required as a cofactor.

It is found in the cytoplasm. The enzyme catalyses tRNA(Ala) + L-alanine + ATP = L-alanyl-tRNA(Ala) + AMP + diphosphate. In terms of biological role, catalyzes the attachment of alanine to tRNA(Ala) in a two-step reaction: alanine is first activated by ATP to form Ala-AMP and then transferred to the acceptor end of tRNA(Ala). Also edits incorrectly charged Ser-tRNA(Ala) and Gly-tRNA(Ala) via its editing domain. This chain is Alanine--tRNA ligase, found in Synechococcus sp. (strain RCC307).